Consider the following 186-residue polypeptide: Ribosome-recycling factor (186 aa).

The protein belongs to the RRF family.

It localises to the cytoplasm. Functionally, responsible for the release of ribosomes from messenger RNA at the termination of protein biosynthesis. May increase the efficiency of translation by recycling ribosomes from one round of translation to another. The protein is Ribosome-recycling factor of Cupriavidus taiwanensis (strain DSM 17343 / BCRC 17206 / CCUG 44338 / CIP 107171 / LMG 19424 / R1) (Ralstonia taiwanensis (strain LMG 19424)).